Consider the following 486-residue polypeptide: Endoglucanase 16 (486 aa).

The N-terminal stretch at 1–30 (MANYKGRGNVMIRSMLLGLYGIINIVCVNG) is a signal peptide. N-linked (GlcNAc...) asparagine glycosylation is present at N29. D87 serves as the catalytic Nucleophile. Active-site residues include H407, D458, and E467.

It belongs to the glycosyl hydrolase 9 (cellulase E) family.

The protein resides in the secreted. The catalysed reaction is Endohydrolysis of (1-&gt;4)-beta-D-glucosidic linkages in cellulose, lichenin and cereal beta-D-glucans.. The polypeptide is Endoglucanase 16 (Arabidopsis thaliana (Mouse-ear cress)).